The sequence spans 307 residues: Acyl transferase (307 aa).

Active-site charge relay system residues include S116, D213, and H243.

The protein belongs to the LuxD family.

The protein operates within lipid metabolism; fatty acid reduction for biolumincescence. In terms of biological role, acyl transferase is part of the fatty acid reductase system required for aldehyde biosynthesis; it produces fatty acids for the luminescent reaction. The chain is Acyl transferase from Aliivibrio fischeri (strain ATCC 700601 / ES114) (Vibrio fischeri).